Consider the following 338-residue polypeptide: Lipoate-protein ligase A (338 aa).

The BPL/LPL catalytic domain occupies P29–V216. Residues R71, G76–F79, and K134 contribute to the ATP site. K134 contributes to the (R)-lipoate binding site.

The protein belongs to the LplA family. In terms of assembly, monomer.

It is found in the cytoplasm. The enzyme catalyses L-lysyl-[lipoyl-carrier protein] + (R)-lipoate + ATP = N(6)-[(R)-lipoyl]-L-lysyl-[lipoyl-carrier protein] + AMP + diphosphate + H(+). It participates in protein modification; protein lipoylation via exogenous pathway; protein N(6)-(lipoyl)lysine from lipoate: step 1/2. Its pathway is protein modification; protein lipoylation via exogenous pathway; protein N(6)-(lipoyl)lysine from lipoate: step 2/2. Functionally, catalyzes both the ATP-dependent activation of exogenously supplied lipoate to lipoyl-AMP and the transfer of the activated lipoyl onto the lipoyl domains of lipoate-dependent enzymes. The polypeptide is Lipoate-protein ligase A (Escherichia fergusonii (strain ATCC 35469 / DSM 13698 / CCUG 18766 / IAM 14443 / JCM 21226 / LMG 7866 / NBRC 102419 / NCTC 12128 / CDC 0568-73)).